The chain runs to 156 residues: Small ribosomal subunit protein uS7 (156 aa).

Belongs to the universal ribosomal protein uS7 family. Part of the 30S ribosomal subunit. Contacts proteins S9 and S11.

In terms of biological role, one of the primary rRNA binding proteins, it binds directly to 16S rRNA where it nucleates assembly of the head domain of the 30S subunit. Is located at the subunit interface close to the decoding center, probably blocks exit of the E-site tRNA. The protein is Small ribosomal subunit protein uS7 of Shewanella sp. (strain ANA-3).